We begin with the raw amino-acid sequence, 378 residues long: Putative protein YbfL (378 aa).

The protein belongs to the transposase 11 family.

The sequence is that of Putative protein YbfL (ybfL) from Escherichia coli (strain K12).